Consider the following 718-residue polypeptide: Cyclomaltodextrin glucanotransferase (718 aa).

The N-terminal stretch at 1–34 (MFQMAKRAFLSTTLTLGLLAGSALPFLPASAVYA) is a signal peptide. Residues 35-172 (DPDTAVTNKQ…GIKIVIDFAP (138 aa)) are A1. The Ca(2+) site is built by D61, N63, N66, and N67. A disulfide bridge connects residues C77 and C84. Ca(2+)-binding residues include G85 and D87. Position 134-135 (134-135 (YW)) interacts with substrate. Residue N173 coordinates Ca(2+). The segment at 173 to 236 (NHTSPAMETD…NLYDLADFNH (64 aa)) is b. H174 is a substrate binding site. Residue I224 participates in Ca(2+) binding. Residues 227-230 (NLYD) and D230 contribute to the substrate site. D233 provides a ligand contact to Ca(2+). Residues 237-440 (NNATIDKYFK…LRKSNPAIAY (204 aa)) are A2. A substrate-binding site is contributed by R261. D263 acts as the Nucleophile in catalysis. Residues 266 to 267 (KH) and H267 contribute to the substrate site. Residue H267 participates in Ca(2+) binding. The Proton donor role is filled by E291. Substrate-binding residues include H361, D405, and R409. The tract at residues 441 to 528 (GSTQQRWINN…ATAVWQYTTA (88 aa)) is c. The segment at 529-614 (ETTPTIGHVG…SNAYNNFTIL (86 aa)) is d. The IPT/TIG domain maps to 532–612 (PTIGHVGPVM…VNSNAYNNFT (81 aa)). The CBM20 domain occupies 613–718 (ILTGDQVTVR…GTATVTVNWQ (106 aa)). Residues 615 to 718 (TGDQVTVRFV…GTATVTVNWQ (104 aa)) are e.

Belongs to the glycosyl hydrolase 13 family. In terms of assembly, monomer. It depends on Ca(2+) as a cofactor.

The protein localises to the secreted. The enzyme catalyses Cyclizes part of a (1-&gt;4)-alpha-D-glucan chain by formation of a (1-&gt;4)-alpha-D-glucosidic bond.. The sequence is that of Cyclomaltodextrin glucanotransferase from Niallia circulans (Bacillus circulans).